The following is a 236-amino-acid chain: Small ribosomal subunit protein uS2c (236 aa).

Belongs to the universal ribosomal protein uS2 family.

It localises to the plastid. It is found in the chloroplast. This chain is Small ribosomal subunit protein uS2c (rps2), found in Citrus sinensis (Sweet orange).